A 133-amino-acid chain; its full sequence is Hydrogenase maturation factor HypA (133 aa).

A Ni(2+)-binding site is contributed by His-2. Zn(2+) contacts are provided by Cys-73, Cys-75, Cys-105, and Cys-108.

This sequence belongs to the HypA/HybF family.

Involved in the maturation of [NiFe] hydrogenases. Required for nickel insertion into the metal center of the hydrogenase. This Methanosarcina acetivorans (strain ATCC 35395 / DSM 2834 / JCM 12185 / C2A) protein is Hydrogenase maturation factor HypA.